Here is a 604-residue protein sequence, read N- to C-terminus: Choline transporter-like protein 3 (604 aa).

2 N-linked (GlcNAc...) asparagine glycosylation sites follow: Asn90 and Asn103. Transmembrane regions (helical) follow at residues 165 to 185 (DTIL…LFTF), 195 to 215 (IIIS…WWLY), 237 to 257 (LAFA…IFTL), 286 to 306 (LWTF…LLSL), and 330 to 350 (YLWW…LTCQ). N-linked (GlcNAc...) asparagine glycosylation is found at Asn454 and Asn472. 2 helical membrane passes run 485–505 (FIIF…GLMA) and 514–534 (VWAI…HSFL). The span at 581 to 592 (NARSQGHKNSLP) shows a compositional bias: polar residues. The segment at 581 to 604 (NARSQGHKNSLPNEEGTELRPIVR) is disordered.

It belongs to the CTL (choline transporter-like) family. Expressed in colon, kidney and ileum.

Its subcellular location is the membrane. The polypeptide is Choline transporter-like protein 3 (Slc44a3) (Rattus norvegicus (Rat)).